The primary structure comprises 1235 residues: DNA polymerase catalytic subunit (1235 aa).

Disordered stretches follow at residues 640–692 (QGRF…TAGR) and 1098–1134 (ATAPGDEPAPPAALPCPAKRPRETPSHADPPGGASKP). Basic and acidic residues predominate over residues 650-661 (APKRPAAAREDE). The span at 662 to 675 (ERPEEEGEDEDERE) shows a compositional bias: acidic residues. The span at 676-691 (EGGGEREPEGARETAG) shows a compositional bias: basic and acidic residues.

Belongs to the DNA polymerase type-B family. In terms of assembly, forms a complex with the ssDNA-binding protein UL29, the DNA polymerase processivity factor, and the alkaline exonuclease. Interacts with the putative helicase-primase complex subunit UL8; this interaction may coordinate leading and lagging strand DNA synthesis at the replication fork.

It is found in the host nucleus. It catalyses the reaction DNA(n) + a 2'-deoxyribonucleoside 5'-triphosphate = DNA(n+1) + diphosphate. It carries out the reaction Endonucleolytic cleavage to 5'-phosphomonoester.. Its function is as follows. Replicates viral genomic DNA. The replication complex is composed of six viral proteins: the DNA polymerase, processivity factor, primase, primase-associated factor, helicase, and ssDNA-binding protein. Additionally, the polymerase contains an intrinsic ribonuclease H (RNase H) activity that specifically degrades RNA/DNA heteroduplexes or duplex DNA substrates in the 5' to 3' direction. Therefore, it can catalyze the excision of the RNA primers that initiate the synthesis of Okazaki fragments at a replication fork during viral DNA replication. In Human herpesvirus 1 (strain Angelotti) (HHV-1), this protein is DNA polymerase catalytic subunit.